We begin with the raw amino-acid sequence, 103 residues long: Small ribosomal subunit protein uS10 (103 aa).

It belongs to the universal ribosomal protein uS10 family. Part of the 30S ribosomal subunit.

Its function is as follows. Involved in the binding of tRNA to the ribosomes. The sequence is that of Small ribosomal subunit protein uS10 from Aliivibrio fischeri (strain ATCC 700601 / ES114) (Vibrio fischeri).